Consider the following 335-residue polypeptide: Serpentine receptor class alpha-13 (335 aa).

The Extracellular segment spans residues 1 to 22 (MAIVSSENRTCADEKLLALYQS). Residues 23–43 (WSYIASIVFNCLVPTISTYFL) traverse the membrane as a helical segment. Topologically, residues 44–61 (GRAIFQLCNQATIQYSTR) are cytoplasmic. The helical transmembrane segment at 62-82 (ILLIATILFAACHQVSYFAFK) threads the bilayer. At 83-107 (IDLLHTMFFKLDQPCFLQRSSYDCR) the chain is on the extracellular side. The helical transmembrane segment at 108-128 (FISIAQTTGVVGMALTGLAMS) threads the bilayer. Over 129-149 (TDRALALTFPADYHKLKSVPR) the chain is Cytoplasmic. The helical transmembrane segment at 150–170 (VVLSVFVFIVSFSTWFLLTMN) threads the bilayer. The Extracellular portion of the chain corresponds to 171–192 (DPLTGYLNHCGFYPSYSVANFQ). A helical membrane pass occupies residues 193–213 (LMLDVILYLAIFNLIWDVILF). The Cytoplasmic segment spans residues 214–235 (YYARQQILWRRSYQFQKRYEAR). The helical transmembrane segment at 236 to 255 (ISLNCTQAVFVISICQCISN) threads the bilayer. The Extracellular segment spans residues 256–278 (GANSGLMRLLMMIGTSITSVTYS). The helical transmembrane segment at 279 to 299 (SLLSLFYTAPYSCILLPILMM) threads the bilayer. Residues 300 to 335 (RISEYIREQRTIGILSLRSEKPGLEEHHQRMRAAWS) are Cytoplasmic-facing.

It belongs to the nematode receptor-like protein sra family.

It is found in the membrane. Its function is as follows. Chemosensory receptor that negatively regulates RAS/MAPK signaling during vulva induction and the negative regulation of olfaction of volitile attractants. Required for the suppression of vulval induction in response to food starvation. Signaling acts through the GPA-5 G-alpha protein subunit. The polypeptide is Serpentine receptor class alpha-13 (Caenorhabditis briggsae).